The chain runs to 472 residues: Siroheme synthase (472 aa).

The precorrin-2 dehydrogenase /sirohydrochlorin ferrochelatase stretch occupies residues 1 to 207 (MNFLPIFLDI…GKDQAAKAWL (207 aa)). NAD(+) is bound by residues 22-23 (EV) and 43-44 (PR). At serine 132 the chain carries Phosphoserine. Residues 221 to 472 (GEVYLVGAGP…QPEGNLPGAE (252 aa)) are uroporphyrinogen-III C-methyltransferase. Proline 230 provides a ligand contact to S-adenosyl-L-methionine. Aspartate 253 functions as the Proton acceptor in the catalytic mechanism. The active-site Proton donor is lysine 275. Residues 306–308 (GGD), isoleucine 311, 336–337 (TA), methionine 388, and glycine 417 each bind S-adenosyl-L-methionine.

It in the N-terminal section; belongs to the precorrin-2 dehydrogenase / sirohydrochlorin ferrochelatase family. This sequence in the C-terminal section; belongs to the precorrin methyltransferase family.

The catalysed reaction is uroporphyrinogen III + 2 S-adenosyl-L-methionine = precorrin-2 + 2 S-adenosyl-L-homocysteine + H(+). The enzyme catalyses precorrin-2 + NAD(+) = sirohydrochlorin + NADH + 2 H(+). It carries out the reaction siroheme + 2 H(+) = sirohydrochlorin + Fe(2+). It functions in the pathway cofactor biosynthesis; adenosylcobalamin biosynthesis; precorrin-2 from uroporphyrinogen III: step 1/1. The protein operates within cofactor biosynthesis; adenosylcobalamin biosynthesis; sirohydrochlorin from precorrin-2: step 1/1. It participates in porphyrin-containing compound metabolism; siroheme biosynthesis; precorrin-2 from uroporphyrinogen III: step 1/1. Its pathway is porphyrin-containing compound metabolism; siroheme biosynthesis; siroheme from sirohydrochlorin: step 1/1. It functions in the pathway porphyrin-containing compound metabolism; siroheme biosynthesis; sirohydrochlorin from precorrin-2: step 1/1. Its function is as follows. Multifunctional enzyme that catalyzes the SAM-dependent methylations of uroporphyrinogen III at position C-2 and C-7 to form precorrin-2 via precorrin-1. Then it catalyzes the NAD-dependent ring dehydrogenation of precorrin-2 to yield sirohydrochlorin. Finally, it catalyzes the ferrochelation of sirohydrochlorin to yield siroheme. The chain is Siroheme synthase from Nitrosospira multiformis (strain ATCC 25196 / NCIMB 11849 / C 71).